Here is a 264-residue protein sequence, read N- to C-terminus: Thiazole synthase (264 aa).

Lys-106 functions as the Schiff-base intermediate with DXP in the catalytic mechanism. 1-deoxy-D-xylulose 5-phosphate is bound by residues Gly-167, 193 to 194 (AG), and 215 to 216 (NS).

It belongs to the ThiG family. As to quaternary structure, homotetramer. Forms heterodimers with either ThiH or ThiS.

Its subcellular location is the cytoplasm. It catalyses the reaction [ThiS sulfur-carrier protein]-C-terminal-Gly-aminoethanethioate + 2-iminoacetate + 1-deoxy-D-xylulose 5-phosphate = [ThiS sulfur-carrier protein]-C-terminal Gly-Gly + 2-[(2R,5Z)-2-carboxy-4-methylthiazol-5(2H)-ylidene]ethyl phosphate + 2 H2O + H(+). Its pathway is cofactor biosynthesis; thiamine diphosphate biosynthesis. Catalyzes the rearrangement of 1-deoxy-D-xylulose 5-phosphate (DXP) to produce the thiazole phosphate moiety of thiamine. Sulfur is provided by the thiocarboxylate moiety of the carrier protein ThiS. In vitro, sulfur can be provided by H(2)S. The protein is Thiazole synthase of Prochlorococcus marinus (strain MIT 9312).